Consider the following 42-residue polypeptide: Potassium channel toxin gamma-KTx 3.4 (42 aa).

4 disulfides stabilise this stretch: cysteine 5–cysteine 23, cysteine 11–cysteine 34, cysteine 20–cysteine 39, and cysteine 24–cysteine 41.

It belongs to the ergtoxin family. Gamma-KTx 3 subfamily. Expressed by the venom gland.

It localises to the secreted. Blocks Kv11/ERG potassium channels. The sequence is that of Potassium channel toxin gamma-KTx 3.4 from Centruroides gracilis (Slenderbrown scorpion).